Here is a 265-residue protein sequence, read N- to C-terminus: MCMVIFAPLFAIFAFATCGGYSGGLRLSVDCVNKTESNLSIDIAFAYPFRLHQVTFEVPTCEGKERQKLALIGDSSSSAEFFVTVAVFAFLYSLAATVVYIFFQNKYRENNRGPLIDFIVTVVFSFLWLVGSSAWAKGLSDVKVATDPKEVLLLMSACKQPSNKCMAIHSPVMSSLNTSVVFGFLNFILWAGNIWFVFKETGWHSSGQRYLSDPMEKHSSSYNQGGYNQDSYGSSSGYSQQASLGPTSDEFGQQPTGPTSFTNQI.

Residues 1–4 (MCMV) are Cytoplasmic-facing. The MARVEL domain occupies 1–202 (MCMVIFAPLF…NIWFVFKETG (202 aa)). Residues 5 to 25 (IFAPLFAIFAFATCGGYSGGL) traverse the membrane as a helical segment. At 26–81 (RLSVDCVNKTESNLSIDIAFAYPFRLHQVTFEVPTCEGKERQKLALIGDSSSSAEF) the chain is on the vesicular side. Asn-33 and Asn-38 each carry an N-linked (GlcNAc...) asparagine glycan. The chain crosses the membrane as a helical span at residues 82-102 (FVTVAVFAFLYSLAATVVYIF). The Cytoplasmic portion of the chain corresponds to 103–114 (FQNKYRENNRGP). Residues 115–135 (LIDFIVTVVFSFLWLVGSSAW) traverse the membrane as a helical segment. Residues 136-177 (AKGLSDVKVATDPKEVLLLMSACKQPSNKCMAIHSPVMSSLN) lie on the Vesicular side of the membrane. Residues 178–198 (TSVVFGFLNFILWAGNIWFVF) form a helical membrane-spanning segment. Residues 199–265 (KETGWHSSGQ…TGPTSFTNQI (67 aa)) lie on the Cytoplasmic side of the membrane. Tandem repeats lie at residues 210–214 (YLSDP), 222–226 (YNQGG), 227–231 (YNQDS), 232–236 (YGSSS), and 238–242 (YSQQA). A 5 X approximate repeats region spans residues 210–242 (YLSDPMEKHSSSYNQGGYNQDSYGSSSGYSQQA). Phosphoserine is present on Ser-212. The disordered stretch occupies residues 221–265 (SYNQGGYNQDSYGSSSGYSQQASLGPTSDEFGQQPTGPTSFTNQI). Positions 224-243 (QGGYNQDSYGSSSGYSQQAS) are enriched in low complexity. Polar residues predominate over residues 244–265 (LGPTSDEFGQQPTGPTSFTNQI).

The protein belongs to the synaptophysin/synaptobrevin family.

The protein localises to the cytoplasmic vesicle. The protein resides in the secretory vesicle. It is found in the synaptic vesicle membrane. Its subcellular location is the synapse. It localises to the synaptosome. Its function is as follows. Intrinsic membrane protein of small synaptic vesicles. Probable vesicular channel protein. This is Synaptoporin (SYNPR) from Homo sapiens (Human).